Consider the following 359-residue polypeptide: Putative nucleotidyltransferase MAB21L1 (359 aa).

Residues 23 to 24 (RK) and 63 to 66 (YEGL) each bind a ribonucleoside 5'-triphosphate. E73 and E75 together coordinate Mg(2+). A ribonucleoside 5'-triphosphate contacts are provided by residues K248 and 252 to 255 (SLLK).

The protein belongs to the mab-21 family. In terms of assembly, monomer. Homodecamer; composed of 2 back to back homopentamers. The protein may exist as monomer in solution and oiligomerizes upon ligand binding.

Its subcellular location is the nucleus. Functionally, putative nucleotidyltransferase required for several aspects of embryonic development including normal development of the eye. It is unclear whether it displays nucleotidyltransferase activity in vivo. Binds single-stranded RNA (ssRNA). The protein is Putative nucleotidyltransferase MAB21L1 (mab21l1) of Xenopus laevis (African clawed frog).